The chain runs to 100 residues: NADH-quinone oxidoreductase subunit K (100 aa).

Helical transmembrane passes span 4 to 24 (FEYYVALSGLLMVLGFIGVII), 28 to 48 (IIAMLLSTELMLNAVNIAFVA), and 61 to 81 (FVFFILTIAAAEAAIGLGLII).

Belongs to the complex I subunit 4L family. NDH-1 is composed of 14 different subunits. Subunits NuoA, H, J, K, L, M, N constitute the membrane sector of the complex.

The protein localises to the cell inner membrane. It carries out the reaction a quinone + NADH + 5 H(+)(in) = a quinol + NAD(+) + 4 H(+)(out). Functionally, NDH-1 shuttles electrons from NADH, via FMN and iron-sulfur (Fe-S) centers, to quinones in the respiratory chain. The immediate electron acceptor for the enzyme in this species is believed to be ubiquinone. Couples the redox reaction to proton translocation (for every two electrons transferred, four hydrogen ions are translocated across the cytoplasmic membrane), and thus conserves the redox energy in a proton gradient. The protein is NADH-quinone oxidoreductase subunit K of Sulfurihydrogenibium sp. (strain YO3AOP1).